The primary structure comprises 444 residues: MTRKYFGTDGVRGTVGEFPITPDFVLKLGWAAGKVLGARGGSKILIGKDTRISGYMFESALEAGISAAGVDVRLLGPLPTPGIAYLTRTLSAQAGIVISASHNPYTDNGIKFFGADGRKLNDEIELEIERLLDEQMSVVSTDQIGKVRRIDDARGRYIEFCKSTAPGLDLNGMKIVVDTANGAAYHIAPDVFEELGATVVPLANQPDGFNINRDCGSTHPEALQRKVVEEKADLGVALDGDADRLLMVDHAGNLVDGDQLLFVVARDRKENGAEMDGVVGTLMSNFGLELALQAEGIEFVRAKVGDRYVMEQLDKRGWNIGGESSGHLVCLDCTTTGDGTVSALQVLAALSRRKQGLAESVADVSMLPQKMINVRGPNRDGFMENGDVQAAMADVEDRLAGNGRILLRPSGTEPLVRVMIEGKDVDRVESLCRELAEVVEKAIN.

S101 (phosphoserine intermediate) is an active-site residue. Residues S101, D239, D241, and D243 each coordinate Mg(2+). S101 carries the phosphoserine modification.

The protein belongs to the phosphohexose mutase family. Mg(2+) is required as a cofactor. In terms of processing, activated by phosphorylation.

It carries out the reaction alpha-D-glucosamine 1-phosphate = D-glucosamine 6-phosphate. Functionally, catalyzes the conversion of glucosamine-6-phosphate to glucosamine-1-phosphate. This Alcanivorax borkumensis (strain ATCC 700651 / DSM 11573 / NCIMB 13689 / SK2) protein is Phosphoglucosamine mutase.